A 139-amino-acid polypeptide reads, in one-letter code: Holo-[acyl-carrier-protein] synthase (139 aa).

The Mg(2+) site is built by aspartate 8 and glutamate 61.

The protein belongs to the P-Pant transferase superfamily. AcpS family. Mg(2+) is required as a cofactor.

It is found in the cytoplasm. It carries out the reaction apo-[ACP] + CoA = holo-[ACP] + adenosine 3',5'-bisphosphate + H(+). Its function is as follows. Transfers the 4'-phosphopantetheine moiety from coenzyme A to a Ser of acyl-carrier-protein. The chain is Holo-[acyl-carrier-protein] synthase from Nitrobacter winogradskyi (strain ATCC 25391 / DSM 10237 / CIP 104748 / NCIMB 11846 / Nb-255).